Here is a 139-residue protein sequence, read N- to C-terminus: MLIPRRTKHRKQHHPRRTGAASGGTTIAFGDYGIQAVEGGYLTNRQIEAARIAMTRHIKRGGKVWINIYPDRPLTKKPAETRMGSGKGSVEWWIANIKPGRVLFELAGVDEPLAREAMRRAQHKLPMKTRFVRREGGDQ.

Basic residues predominate over residues 1 to 17 (MLIPRRTKHRKQHHPRR). The disordered stretch occupies residues 1 to 24 (MLIPRRTKHRKQHHPRRTGAASGG).

It belongs to the universal ribosomal protein uL16 family. Part of the 50S ribosomal subunit.

Its function is as follows. Binds 23S rRNA and is also seen to make contacts with the A and possibly P site tRNAs. The chain is Large ribosomal subunit protein uL16 from Beutenbergia cavernae (strain ATCC BAA-8 / DSM 12333 / CCUG 43141 / JCM 11478 / NBRC 16432 / NCIMB 13614 / HKI 0122).